Here is a 289-residue protein sequence, read N- to C-terminus: Ferri-bacillibactin esterase BesA (289 aa).

Catalysis depends on charge relay system residues S163, E225, and H263.

This sequence belongs to the esterase D family.

It is found in the cytoplasm. Its function is as follows. Catalyzes the hydrolysis of the trilactone cycle of ferri-bacillibactin (ferri-BB) complex, leading to the formation of bacillibactin monomers and to cytosolic iron release, thus making iron available for metabolic use. Can also hydrolyze bacillibactin (BB), however the catalytic efficiency for ferri-BB hydrolysis is much higher than for BB. This is Ferri-bacillibactin esterase BesA (besA) from Bacillus subtilis (strain 168).